A 415-amino-acid chain; its full sequence is Probable N-acetyl-gamma-glutamyl-phosphate reductase, chloroplastic (415 aa).

Residues 1–74 (MGSTALGGGA…SGVKSGEEVR (74 aa)) constitute a chloroplast transit peptide. The disordered stretch occupies residues 48–68 (VRASVASSPQKQHSPKTSGVK). Residues 56–67 (PQKQHSPKTSGV) are compositionally biased toward polar residues. Residue C219 is part of the active site.

This sequence belongs to the NAGSA dehydrogenase family. Type 1 subfamily. In terms of assembly, homotetramer.

The protein localises to the plastid. It localises to the chloroplast. It catalyses the reaction N-acetyl-L-glutamate 5-semialdehyde + phosphate + NADP(+) = N-acetyl-L-glutamyl 5-phosphate + NADPH + H(+). The protein operates within amino-acid biosynthesis; L-arginine biosynthesis; N(2)-acetyl-L-ornithine from L-glutamate: step 3/4. This chain is Probable N-acetyl-gamma-glutamyl-phosphate reductase, chloroplastic, found in Oryza sativa subsp. japonica (Rice).